Consider the following 102-residue polypeptide: Small ribosomal subunit protein uS10 (102 aa).

The tract at residues 35–58 (SGPIPLPTKTLEIPSRKSPDGEGT) is disordered.

Belongs to the universal ribosomal protein uS10 family. As to quaternary structure, part of the 30S ribosomal subunit.

Functionally, involved in the binding of tRNA to the ribosomes. This Halorubrum lacusprofundi (strain ATCC 49239 / DSM 5036 / JCM 8891 / ACAM 34) protein is Small ribosomal subunit protein uS10.